We begin with the raw amino-acid sequence, 157 residues long: SsrA-binding protein (157 aa).

The protein belongs to the SmpB family.

The protein resides in the cytoplasm. Functionally, required for rescue of stalled ribosomes mediated by trans-translation. Binds to transfer-messenger RNA (tmRNA), required for stable association of tmRNA with ribosomes. tmRNA and SmpB together mimic tRNA shape, replacing the anticodon stem-loop with SmpB. tmRNA is encoded by the ssrA gene; the 2 termini fold to resemble tRNA(Ala) and it encodes a 'tag peptide', a short internal open reading frame. During trans-translation Ala-aminoacylated tmRNA acts like a tRNA, entering the A-site of stalled ribosomes, displacing the stalled mRNA. The ribosome then switches to translate the ORF on the tmRNA; the nascent peptide is terminated with the 'tag peptide' encoded by the tmRNA and targeted for degradation. The ribosome is freed to recommence translation, which seems to be the essential function of trans-translation. This Aquifex aeolicus (strain VF5) protein is SsrA-binding protein.